A 722-amino-acid polypeptide reads, in one-letter code: MSFCLTELHLWSLKSTLHIADRDIGVYQYYDKKDPSVSATEHGNLEEKQRLAESRDYPWTLKNRRPEKLRDSLKELEELMQSSPCVLSKWKSKYICQLLFGSGVLVSLSLSGPQLEKVVIDRSLVGKLISDTISDALLTDSFIILSFLAQNKLCFIQFTKKMDSLDGNKRLEKLSALDLKISYYDIPGPANRTIDRHLAVNSTQDLVVCWWPLVSDDVWPWTPVSSEKDRANMLLLGFTQGGLEVLSFVRTEWSPLDVHFGTKQPYQVFTVECSVSVDKEPMADSCIYESVRNKLHCVSVTRIPLRSKAISCCRNSTEDKLIVGCEDSSVILYEAHRGVTLLAQAELRPSLISCHPSGAILLVGSNQGELQIFDIALSPINIQLLAEDYSPKETLQFKKFFDVSSSLVQMQWMAPPVVFQKPKRGEICDLLFLRFNKGPLGVLLFKLGILTRGQLGLVDLILQYIHYSEVYEAISILRSMDWDTLGQQCLIGMGTIVNHLLRQRLTPEREAQLEASLGTFYAPTRPLLDTTILEYREPVSKYARRLFHHLLRYKRFEKAFLLAVDIGARDLFMDIHYLALDMGELALAEVARRRAHDIDVESVSSGVELLGPLDRRDMLNEGFASSALMPEGENKFPGLLPSIGSTHMQTLQQKIPNGPSSRWAIERRTEEEEEEEEEEEEELCTDSSGATTWNAEGELKEDQRKQDIGDVGSLRMVHFGLV.

WD repeat units lie at residues 305 to 343 (LRSK…TLLA) and 344 to 383 (QAEL…INIQ). Residues 655-710 (IPNGPSSRWAIERRTEEEEEEEEEEEEELCTDSSGATTWNAEGELKEDQRKQDIGD) are disordered. Residues 671 to 684 (EEEEEEEEEEEELC) are compositionally biased toward acidic residues. A compositionally biased stretch (polar residues) spans 685 to 694 (TDSSGATTWN). Residues 697 to 708 (GELKEDQRKQDI) are compositionally biased toward basic and acidic residues.

It belongs to the WD repeat fritz family. Component of the CPLANE (ciliogenesis and planar polarity effectors) complex, composed of INTU, FUZ and WDPCP. Interacts with CPLANE1.

It localises to the cell membrane. It is found in the cytoplasm. The protein localises to the cytoskeleton. Its subcellular location is the cilium axoneme. The protein resides in the cilium basal body. In terms of biological role, probable effector of the planar cell polarity signaling pathway which regulates the septin cytoskeleton in both ciliogenesis and collective cell movements. Together with FUZ and WDPCP proposed to function as core component of the CPLANE (ciliogenesis and planar polarity effectors) complex involved in the recruitment of peripheral IFT-A proteins to basal bodies. Binds phosphatidylinositol 3-phosphate with highest affinity, followed by phosphatidylinositol 4-phosphate and phosphatidylinositol 5-phosphate. The chain is WD repeat-containing and planar cell polarity effector protein fritz homolog (Wdpcp) from Mus musculus (Mouse).